The primary structure comprises 655 residues: MATIESILHENRIFPPASEFVRNANLSGREAYETLRQEAEHDYTGFWAKLAQQYIAWHKPFTRVLNDANPPFYKWFDDGELNISWNCLDRHLATQADKTAIIFESDAGEVNHCSYRELHRQVCHFANGLKSLGIRQGDRVVIYMPMRIEAVVAMQACARIGAIHSVVFGGFSAKSVYERIIDAGASAVITADEQIRGGRYHPLKATVDEALAMGDTATVHSVIVFRHTGTGITWQPERDHWWHDLIAGQPDECEPAWINAEHPLFTLYTSGSTGKPKGVQHSSAGYLLGAVTSMQWVFDYHADDVFWCTADVGWVTGHSYVAYGPLAIGATQVIFEGTPTHPHAGRFWEIIQKHRITTFYTAPTAIRSLIKLGSDLPAKYDLSSLRLLGSVGEPINPEAWMWYYTVVGQSRCPVVDTWWQTETGCHMIAPAPGAISTKPGSCTLPLPGIDAAVVDETGHPVEQGKGGFLVIKRPFPSMLRTLWNDPERFRKTYFPTDIAGGRYYLAGDSAHRDQDGYFWIMGRVDDVLNVSGHRLGTMEIESALVAHPLVAEAAVVGKPHEIKGEVVVAFVTLREKLPDDQRAAEIAATLREWVASEIGAIARPEEIRFGENLPKTRSGKIMRRLLRALARGETITQDVSTLENPVILEQLSQTV.

CoA contacts are provided by residues 196–199 and threonine 316; that span reads RGGR. ATP contacts are provided by residues 392–394, 416–421, aspartate 508, and arginine 523; these read GEP and DTWWQT. Position 531 (serine 531) interacts with CoA. Arginine 534 provides a ligand contact to ATP. Valine 545, histidine 547, and valine 550 together coordinate Mg(2+). Lysine 620 is subject to N6-acetyllysine.

This sequence belongs to the ATP-dependent AMP-binding enzyme family. The cofactor is Mg(2+). Post-translationally, acetylated. Deacetylation by the SIR2-homolog deacetylase activates the enzyme.

It carries out the reaction acetate + ATP + CoA = acetyl-CoA + AMP + diphosphate. Functionally, catalyzes the conversion of acetate into acetyl-CoA (AcCoA), an essential intermediate at the junction of anabolic and catabolic pathways. AcsA undergoes a two-step reaction. In the first half reaction, AcsA combines acetate with ATP to form acetyl-adenylate (AcAMP) intermediate. In the second half reaction, it can then transfer the acetyl group from AcAMP to the sulfhydryl group of CoA, forming the product AcCoA. The polypeptide is Acetyl-coenzyme A synthetase (Nitrosomonas europaea (strain ATCC 19718 / CIP 103999 / KCTC 2705 / NBRC 14298)).